Consider the following 742-residue polypeptide: 2'-5'-oligoadenylate synthase 2 (742 aa).

The interval 1–35 is disordered; that stretch reads MGNWLTGNWSSDRSSGYSSGWSPGGSSGVPSGPVH. G2 carries N-myristoyl glycine lipidation. The segment covering 10–21 has biased composition (low complexity); sequence SSDRSSGYSSGW. OAS domain stretches follow at residues 60–374 and 382–721; these read VPSQ…YWDV and TPSH…WKVP. An N6-acetyllysine modification is found at K417. S436 is a binding site for ATP. The Mg(2+) site is built by D448, D450, and D519. The ATP site is built by R582 and K585.

Belongs to the 2-5A synthase family. As to quaternary structure, homodimer. The cofactor is Mg(2+). In terms of processing, myristoylation is not essential for its activity. Glycosylated. Glycosylation is essential for its activity. In terms of tissue distribution, expressed in the uterus. Expressed in mammary glands: expressed at low level before the establishment of lactation, then expression strongly increases, and subsequently decreases during early involution.

The protein localises to the cytoplasm. Its subcellular location is the perinuclear region. The catalysed reaction is 3 ATP = 5'-triphosphoadenylyl-(2'-&gt;5')-adenylyl-(2'-&gt;5')-adenosine + 2 diphosphate. Produced as a latent enzyme which is activated by double stranded RNA (dsRNA) generated during the course of viral infection. The dsRNA activator must be at least 15 nucleotides long, and no modification of the 2'-hydroxyl group is tolerated. ssRNA or dsDNA do not act as activators. Strongly inhibited by copper, iron and zinc ions. Partially inhibited by cobalt and nickel ions. Its function is as follows. Interferon-induced, dsRNA-activated antiviral enzyme which plays a critical role in cellular innate antiviral response. Activated by detection of double stranded RNA (dsRNA): polymerizes higher oligomers of 2'-5'-oligoadenylates (2-5A) from ATP which then bind to the inactive monomeric form of ribonuclease L (RNASEL) leading to its dimerization and subsequent activation. Activation of RNASEL leads to degradation of cellular as well as viral RNA, resulting in the inhibition of protein synthesis, thus terminating viral replication. Can mediate the antiviral effect via the classical RNASEL-dependent pathway or an alternative antiviral pathway independent of RNASEL. In addition, it may also play a role in other cellular processes such as apoptosis, cell growth, differentiation and gene regulation. May act as a negative regulator of lactation, stopping lactation in virally infected mammary gland lobules, thereby preventing transmission of viruses to neonates. Non-infected lobules would not be affected, allowing efficient pup feeding during infection. The sequence is that of 2'-5'-oligoadenylate synthase 2 from Mus musculus (Mouse).